Reading from the N-terminus, the 433-residue chain is Probable oxaloacetate decarboxylase beta chain (433 aa).

A run of 9 helical transmembrane segments spans residues L13–I35, Y125–A147, L162–L184, F189–V211, L215–I237, I267–G289, T309–S328, T340–A362, and F404–V426.

Belongs to the GcdB/MmdB/OadB family. As to quaternary structure, heterotrimer of an alpha, a beta and a gamma subunit. The cofactor is Na(+).

Its subcellular location is the cell membrane. It catalyses the reaction oxaloacetate + 2 Na(+)(in) + H(+) = pyruvate + 2 Na(+)(out) + CO2. In terms of biological role, catalyzes the decarboxylation of oxaloacetate coupled to Na(+) translocation. This Vibrio cholerae serotype O1 (strain ATCC 39315 / El Tor Inaba N16961) protein is Probable oxaloacetate decarboxylase beta chain (oadB).